A 212-amino-acid polypeptide reads, in one-letter code: Thymidylate kinase (212 aa).

Residue 10–17 (GLDGAGKT) coordinates ATP.

The protein belongs to the thymidylate kinase family.

The catalysed reaction is dTMP + ATP = dTDP + ADP. Functionally, phosphorylation of dTMP to form dTDP in both de novo and salvage pathways of dTTP synthesis. In Blochmanniella pennsylvanica (strain BPEN), this protein is Thymidylate kinase.